The chain runs to 265 residues: Tryptophan synthase alpha chain (265 aa).

Catalysis depends on proton acceptor residues E49 and E60.

This sequence belongs to the TrpA family. As to quaternary structure, tetramer of two alpha and two beta chains.

The catalysed reaction is (1S,2R)-1-C-(indol-3-yl)glycerol 3-phosphate + L-serine = D-glyceraldehyde 3-phosphate + L-tryptophan + H2O. Its pathway is amino-acid biosynthesis; L-tryptophan biosynthesis; L-tryptophan from chorismate: step 5/5. Functionally, the alpha subunit is responsible for the aldol cleavage of indoleglycerol phosphate to indole and glyceraldehyde 3-phosphate. This chain is Tryptophan synthase alpha chain, found in Herminiimonas arsenicoxydans.